Reading from the N-terminus, the 54-residue chain is Photosystem II reaction center protein K (54 aa).

Positions 1–17 (MSFITLNNFFNTNTFFG) are excised as a propeptide. A helical transmembrane segment spans residues 29–49 (LIDVLPIIPVLFFLLAFVWQA).

The protein belongs to the PsbK family. PSII is composed of 1 copy each of membrane proteins PsbA, PsbB, PsbC, PsbD, PsbE, PsbF, PsbH, PsbI, PsbJ, PsbK, PsbL, PsbM, PsbT, PsbY, PsbZ, Psb30/Ycf12, at least 3 peripheral proteins of the oxygen-evolving complex and a large number of cofactors. It forms dimeric complexes.

It is found in the plastid. Its subcellular location is the chloroplast thylakoid membrane. In terms of biological role, one of the components of the core complex of photosystem II (PSII). PSII is a light-driven water:plastoquinone oxidoreductase that uses light energy to abstract electrons from H(2)O, generating O(2) and a proton gradient subsequently used for ATP formation. It consists of a core antenna complex that captures photons, and an electron transfer chain that converts photonic excitation into a charge separation. The chain is Photosystem II reaction center protein K from Euglena gracilis.